A 66-amino-acid polypeptide reads, in one-letter code: Large ribosomal subunit protein bL35 (66 aa).

Positions M1–R16 are enriched in basic residues. The tract at residues M1–G21 is disordered.

It belongs to the bacterial ribosomal protein bL35 family.

This chain is Large ribosomal subunit protein bL35, found in Streptococcus pneumoniae serotype 2 (strain D39 / NCTC 7466).